Here is a 208-residue protein sequence, read N- to C-terminus: Ribonuclease HII (208 aa).

The region spanning 11–203 (GPVAGVDEAG…VAAAHEQWLK (193 aa)) is the RNase H type-2 domain. A divalent metal cation-binding residues include aspartate 17, glutamate 18, and aspartate 112.

It belongs to the RNase HII family. Requires Mn(2+) as cofactor. The cofactor is Mg(2+).

Its subcellular location is the cytoplasm. The catalysed reaction is Endonucleolytic cleavage to 5'-phosphomonoester.. In terms of biological role, endonuclease that specifically degrades the RNA of RNA-DNA hybrids. This Corynebacterium jeikeium (strain K411) protein is Ribonuclease HII.